The chain runs to 156 residues: 6,7-dimethyl-8-ribityllumazine synthase (156 aa).

Residues Phe-23, 57 to 59 (AFE), and 81 to 83 (AVI) contribute to the 5-amino-6-(D-ribitylamino)uracil site. A (2S)-2-hydroxy-3-oxobutyl phosphate-binding site is contributed by 86-87 (ST). Residue His-89 is the Proton donor of the active site. Phe-114 contacts 5-amino-6-(D-ribitylamino)uracil. Arg-128 is a (2S)-2-hydroxy-3-oxobutyl phosphate binding site.

The protein belongs to the DMRL synthase family.

The enzyme catalyses (2S)-2-hydroxy-3-oxobutyl phosphate + 5-amino-6-(D-ribitylamino)uracil = 6,7-dimethyl-8-(1-D-ribityl)lumazine + phosphate + 2 H2O + H(+). Its pathway is cofactor biosynthesis; riboflavin biosynthesis; riboflavin from 2-hydroxy-3-oxobutyl phosphate and 5-amino-6-(D-ribitylamino)uracil: step 1/2. In terms of biological role, catalyzes the formation of 6,7-dimethyl-8-ribityllumazine by condensation of 5-amino-6-(D-ribitylamino)uracil with 3,4-dihydroxy-2-butanone 4-phosphate. This is the penultimate step in the biosynthesis of riboflavin. The sequence is that of 6,7-dimethyl-8-ribityllumazine synthase from Campylobacter curvus (strain 525.92).